Here is an 86-residue protein sequence, read N- to C-terminus: uncharacterized protein (86 aa).

This is an uncharacterized protein from Ovis aries (Sheep).